The following is a 233-amino-acid chain: Large ribosomal subunit protein uL2 (233 aa).

Residues 195 to 233 (PHGGGNHQHVGRPSTVGRNAPPGRKVGRLSPKRRRVNGR) form a disordered region. The span at 219–233 (KVGRLSPKRRRVNGR) shows a compositional bias: basic residues.

The protein belongs to the universal ribosomal protein uL2 family. As to quaternary structure, part of the 50S ribosomal subunit. Forms a bridge to the 30S subunit in the 70S ribosome.

Its function is as follows. One of the primary rRNA binding proteins. Required for association of the 30S and 50S subunits to form the 70S ribosome, for tRNA binding and peptide bond formation. It has been suggested to have peptidyltransferase activity; this is somewhat controversial. Makes several contacts with the 16S rRNA in the 70S ribosome. In Thermoplasma acidophilum (strain ATCC 25905 / DSM 1728 / JCM 9062 / NBRC 15155 / AMRC-C165), this protein is Large ribosomal subunit protein uL2.